The primary structure comprises 468 residues: 6-phospho-beta-galactosidase (468 aa).

D-galactose 6-phosphate is bound by residues Q19, H116, N159, E160, and N297. Residue E160 is the Proton donor of the active site. The active-site Nucleophile is E375. Residues S428, W429, K435, and Y437 each contribute to the D-galactose 6-phosphate site.

The protein belongs to the glycosyl hydrolase 1 family.

It catalyses the reaction a 6-phospho-beta-D-galactoside + H2O = D-galactose 6-phosphate + an alcohol. The protein operates within carbohydrate metabolism; lactose degradation; D-galactose 6-phosphate and beta-D-glucose from lactose 6-phosphate: step 1/1. The chain is 6-phospho-beta-galactosidase from Streptococcus pneumoniae (strain JJA).